A 196-amino-acid chain; its full sequence is Proteasome subunit beta (196 aa).

Position 1 (methionine 1) is a propeptide, removed in mature form; by autocatalysis. Threonine 2 (nucleophile) is an active-site residue.

Belongs to the peptidase T1B family. The 20S proteasome core is composed of 14 alpha and 14 beta subunits that assemble into four stacked heptameric rings, resulting in a barrel-shaped structure. The two inner rings, each composed of seven catalytic beta subunits, are sandwiched by two outer rings, each composed of seven alpha subunits. The catalytic chamber with the active sites is on the inside of the barrel. Has a gated structure, the ends of the cylinder being occluded by the N-termini of the alpha-subunits. Is capped at one or both ends by the proteasome regulatory ATPase, PAN.

The protein resides in the cytoplasm. The enzyme catalyses Cleavage of peptide bonds with very broad specificity.. With respect to regulation, the formation of the proteasomal ATPase PAN-20S proteasome complex, via the docking of the C-termini of PAN into the intersubunit pockets in the alpha-rings, triggers opening of the gate for substrate entry. Interconversion between the open-gate and close-gate conformations leads to a dynamic regulation of the 20S proteasome proteolysis activity. Functionally, component of the proteasome core, a large protease complex with broad specificity involved in protein degradation. In Nanoarchaeum equitans (strain Kin4-M), this protein is Proteasome subunit beta.